The chain runs to 377 residues: Protein RecA (377 aa).

66–73 (GPESSGKT) lines the ATP pocket. A disordered region spans residues 329 to 377 (VGVRPEEPTAEPGADAAVTSAAAATDDTAKTVSAPAAKTTKSKAAAAKS). Positions 342 to 377 (ADAAVTSAAAATDDTAKTVSAPAAKTTKSKAAAAKS) are enriched in low complexity.

Belongs to the RecA family.

It is found in the cytoplasm. In terms of biological role, can catalyze the hydrolysis of ATP in the presence of single-stranded DNA, the ATP-dependent uptake of single-stranded DNA by duplex DNA, and the ATP-dependent hybridization of homologous single-stranded DNAs. It interacts with LexA causing its activation and leading to its autocatalytic cleavage. The polypeptide is Protein RecA (Streptomyces avermitilis (strain ATCC 31267 / DSM 46492 / JCM 5070 / NBRC 14893 / NCIMB 12804 / NRRL 8165 / MA-4680)).